We begin with the raw amino-acid sequence, 69 residues long: uncharacterized protein (69 aa).

Residues 1–21 (MELLIPLSLLGLYLFSGTRDS) form the signal peptide. N41 carries N-linked (GlcNAc...) asparagine glycosylation.

The protein localises to the secreted. This is an uncharacterized protein from Dictyostelium discoideum (Social amoeba).